The chain runs to 151 residues: 3-dehydroquinate dehydratase (151 aa).

The active-site Proton acceptor is Tyr24. Substrate contacts are provided by Asn76, His82, and Asp89. His102 serves as the catalytic Proton donor. Substrate-binding positions include 103 to 104 and Arg113; that span reads VS.

This sequence belongs to the type-II 3-dehydroquinase family. In terms of assembly, homododecamer.

The catalysed reaction is 3-dehydroquinate = 3-dehydroshikimate + H2O. Its pathway is metabolic intermediate biosynthesis; chorismate biosynthesis; chorismate from D-erythrose 4-phosphate and phosphoenolpyruvate: step 3/7. In terms of biological role, catalyzes a trans-dehydration via an enolate intermediate. This Afipia carboxidovorans (strain ATCC 49405 / DSM 1227 / KCTC 32145 / OM5) (Oligotropha carboxidovorans) protein is 3-dehydroquinate dehydratase.